A 702-amino-acid chain; its full sequence is p-hydroxybenzoic acid--AMP ligase FadD22 (702 aa).

Residues 538-616 (ERHRLVLDAV…GLAQYLEAEL (79 aa)) enclose the Carrier domain. Ser576 is modified (O-(pantetheine 4'-phosphoryl)serine).

This sequence belongs to the ATP-dependent AMP-binding enzyme family.

It carries out the reaction holo-[4-hydroxyphenylalkanoate synthase] + 4-hydroxybenzoate + ATP = 4-hydroxyphenyl-[4-hydroxyphenylalkanoate synthase] + AMP + diphosphate. The protein operates within lipid metabolism; fatty acid biosynthesis. Its function is as follows. Catalyzes the adenylation of p-hydroxybenzoic acid (pHBA) to form p-hydroxybenzoic acid-AMP (pHBA-AMP), which is converted directly to p-hydroxybenzoyl-S-FadD22 (pHBA-S-FAdD22) thioester intermediate in a CoA-independent manner by attack of the phosphopantetheine thiol of FadD22. This intermediate primes the biosynthesis of the phenolphthiocerol (PPOL) by presenting the pHBA starter unit for elongation by Pks15/1. PPOL is an important intermediate in the biosynthesis of phenolic glycolipid (mycosid B). This chain is p-hydroxybenzoic acid--AMP ligase FadD22 (fadD22), found in Mycobacterium marinum (strain ATCC BAA-535 / M).